The sequence spans 649 residues: MISPAWSLFLIGTKIGLFFQVAPLSVMAKSCPSVCRCDAGFIYCNDRSLTSIPVGIPEDATTLYLQNNQINNVGIPSDLKNLLKVQRIYLYHNSLDEFPTNLPKYVKELHLQENNIRTITYDSLSKIPYLEELHLDDNSVSAVSIEEGAFRDSNYLRLLFLSRNHLSTIPGGLPRTIEELRLDDNRISTISSPSLHGLTSLKRLVLDGNLLNNHGLGDKVFFNLVNLTELSLVRNSLTAAPVNLPGTSLRKLYLQDNHINRVPPNAFSYLRQLYRLDMSNNNLSNLPQGIFDDLDNITQLILRNNPWYCGCKMKWVRDWLQSLPVKVNVRGLMCQAPEKVRGMAIKDLSAELFDCKDSGIVSTVQITTAIPNTAYPAQGQWPAPVTKQPDIKNPKLTKDQRTTGSPSRKTILITVKSVTPDTIHISWRLALPMTALRLSWLKLGHSPAFGSITETIVTGERSEYLVTALEPESPYRVCMVPMETSNLYLFDETPVCIETQTAPLRMYNPTTTLNREQEKEPYKNPNLPLAAIIGGAVALVSIALLALVCWYVHRNGSLFSRNCAYSKGRRRKDDYAEAGTKKDNSILEIRETSFQMLPISNEPISKEEFVIHTIFPPNGMNLYKNNLSESSSNRSYRDSGIPDLDHSHS.

A signal peptide spans 1–28 (MISPAWSLFLIGTKIGLFFQVAPLSVMA). The LRRNT domain occupies 29–58 (KSCPSVCRCDAGFIYCNDRSLTSIPVGIPE). Over 29–528 (KSCPSVCRCD…KEPYKNPNLP (500 aa)) the chain is Extracellular. Disulfide bonds link Cys31-Cys37 and Cys35-Cys44. The tract at residues 38-67 (DAGFIYCNDRSLTSIPVGIPEDATTLYLQN) is interaction with ADGRL3. LRR repeat units lie at residues 59-80 (DATT…SDLK), 84-104 (KVQR…NLPK), 105-126 (YVKE…SLSK), 129-150 (YLEE…EGAF), 155-176 (YLRL…LPRT), 177-197 (IEEL…SLHG), 200-220 (SLKR…GDKV), 226-247 (NLTE…LPGT), 248-269 (SLRK…AFSY), and 272-293 (QLYR…IFDD). Asn226 carries an N-linked (GlcNAc...) asparagine glycan. Asn282 and Asn296 each carry an N-linked (GlcNAc...) asparagine glycan. Residues 305-357 (NPWYCGCKMKWVRDWLQSLPVKVNVRGLMCQAPEKVRGMAIKDLSAELFDCKD) form the LRRCT domain. Cys309 and Cys334 form a disulfide bridge. The segment at 378 to 405 (QGQWPAPVTKQPDIKNPKLTKDQRTTGS) is disordered. Basic and acidic residues predominate over residues 389-401 (PDIKNPKLTKDQR). The 100-residue stretch at 405–504 (SPSRKTILIT…VCIETQTAPL (100 aa)) folds into the Fibronectin type-III domain. Residues 529–549 (LAAIIGGAVALVSIALLALVC) form a helical membrane-spanning segment. Topologically, residues 550-649 (WYVHRNGSLF…GIPDLDHSHS (100 aa)) are cytoplasmic. Positions 629–649 (ESSSNRSYRDSGIPDLDHSHS) are disordered.

In terms of assembly, monomer and homodimer. Self-associates (via leucine-rich repeats), giving rise to homooligomers. Interacts with FGFR1. Interacts (via extracellular domain) with ADGRL1/LPHN1 and ADGRL3 (via olfactomedin-like domain). Interacts (via extracellular domain) with LPHN2 (via olfactomedin-like domain). Interacts (via extracellular domain) with UNC5B (via Ig domain). May also interact (via extracellular domain) with UNC5A and UNC5C. Interacts (via extracellular domain) with UNC5D (via extracellular domain). Identified in complexes composed of FLRT3, ADGRL3 and UNC5B, respectively FLRT3, ADGRL3 and UNC5D. Interacts (via cytoplasmic domain) with ROBO1. In terms of processing, N-glycosylated. Post-translationally, proteolytic cleavage in the juxtamembrane region gives rise to a soluble ectodomain. Cleavage is probably effected by a metalloprotease. As to expression, detected in brain (at protein level). Detected in brain neurons, especially in basal ganglia, hippocampus dentate gyrus and CA3 region, cerebellum and in olfactory bulb.

Its subcellular location is the cell membrane. It localises to the presynaptic cell membrane. The protein localises to the synapse. It is found in the synaptosome. The protein resides in the postsynaptic density. Its subcellular location is the cell projection. It localises to the dendrite. The protein localises to the axon. It is found in the growth cone membrane. The protein resides in the cytoplasmic vesicle. Its subcellular location is the endoplasmic reticulum membrane. It localises to the cell junction. The protein localises to the focal adhesion. It is found in the secreted. Functionally, functions in cell-cell adhesion, cell migration and axon guidance, exerting an attractive or repulsive role depending on its interaction partners. Plays a role in the spatial organization of brain neurons. Plays a role in vascular development in the retina. Plays a role in cell-cell adhesion via its interaction with ADGRL3 and probably also other latrophilins that are expressed at the surface of adjacent cells. Interaction with the intracellular domain of ROBO1 mediates axon attraction towards cells expressing NTN1. Mediates axon growth cone collapse and plays a repulsive role in neuron guidance via its interaction with UNC5B, and possibly also other UNC-5 family members. Promotes neurite outgrowth (in vitro). Mediates cell-cell contacts that promote an increase both in neurite number and in neurite length. Plays a role in the regulation of the density of glutamaergic synapses. Plays a role in fibroblast growth factor-mediated signaling cascades. Required for normal morphogenesis during embryonic development, but not for normal embryonic patterning. Required for normal ventral closure, headfold fusion and definitive endoderm migration during embryonic development. Required for the formation of a normal basement membrane and the maintenance of a normal anterior visceral endoderm during embryonic development. The polypeptide is Leucine-rich repeat transmembrane protein FLRT3 (Flrt3) (Rattus norvegicus (Rat)).